The following is a 796-amino-acid chain: Exocyst complex component 3 (796 aa).

Positions 87-174 (PQLKEKLREL…GTNTEKEQML (88 aa)) form a coiled coil.

Belongs to the SEC6 family. In terms of assembly, the exocyst complex is composed of sec-3/exoc1, sec-5/exoc2, sec-6/exoc3, sec-8/exoc4, sec-10/exoc5, sec-15/exoc6, exo-70/exoc7 and exo-84/exoc8.

Functionally, component of the exocyst complex involved in the docking of exocytic vesicles with fusion sites on the plasma membrane. This chain is Exocyst complex component 3 (sec-6), found in Caenorhabditis elegans.